We begin with the raw amino-acid sequence, 529 residues long: Peptide chain release factor 3 (529 aa).

Residues 10–278 (ARRRTFAIIS…MFVEFAPGPQ (269 aa)) enclose the tr-type G domain. Residues 19 to 26 (SHPDAGKT), 87 to 91 (DTPGH), and 141 to 144 (NKMD) each bind GTP.

The protein belongs to the TRAFAC class translation factor GTPase superfamily. Classic translation factor GTPase family. PrfC subfamily.

It localises to the cytoplasm. Its function is as follows. Increases the formation of ribosomal termination complexes and stimulates activities of RF-1 and RF-2. It binds guanine nucleotides and has strong preference for UGA stop codons. It may interact directly with the ribosome. The stimulation of RF-1 and RF-2 is significantly reduced by GTP and GDP, but not by GMP. The sequence is that of Peptide chain release factor 3 from Nitratidesulfovibrio vulgaris (strain DSM 19637 / Miyazaki F) (Desulfovibrio vulgaris).